A 207-amino-acid polypeptide reads, in one-letter code: NADH-quinone oxidoreductase subunit C (207 aa).

Belongs to the complex I 30 kDa subunit family. As to quaternary structure, NDH-1 is composed of 14 different subunits. Subunits NuoB, C, D, E, F, and G constitute the peripheral sector of the complex.

It localises to the cell inner membrane. The enzyme catalyses a quinone + NADH + 5 H(+)(in) = a quinol + NAD(+) + 4 H(+)(out). In terms of biological role, NDH-1 shuttles electrons from NADH, via FMN and iron-sulfur (Fe-S) centers, to quinones in the respiratory chain. The immediate electron acceptor for the enzyme in this species is believed to be ubiquinone. Couples the redox reaction to proton translocation (for every two electrons transferred, four hydrogen ions are translocated across the cytoplasmic membrane), and thus conserves the redox energy in a proton gradient. This is NADH-quinone oxidoreductase subunit C from Bordetella pertussis (strain Tohama I / ATCC BAA-589 / NCTC 13251).